Consider the following 110-residue polypeptide: Cation efflux system protein CusF (110 aa).

The signal sequence occupies residues Met-1–Gln-21.

In terms of assembly, the cus efflux system is composed of CusA, CusB, CusC and CusF. Interacts with copper-exporting P-type ATPase CopA; when this protein is precharged with copper it binds very little CopA.

The protein localises to the periplasm. Functionally, part of a cation efflux system that mediates resistance to copper and silver. Binds one copper per polypeptide. The protein is Cation efflux system protein CusF (cusF) of Escherichia coli (strain K12).